A 191-amino-acid chain; its full sequence is Peptidyl-tRNA hydrolase (191 aa).

TRNA is bound at residue Tyr-17. His-22 (proton acceptor) is an active-site residue. Positions 68, 70, and 116 each coordinate tRNA.

The protein belongs to the PTH family. Monomer.

Its subcellular location is the cytoplasm. The catalysed reaction is an N-acyl-L-alpha-aminoacyl-tRNA + H2O = an N-acyl-L-amino acid + a tRNA + H(+). Functionally, hydrolyzes ribosome-free peptidyl-tRNAs (with 1 or more amino acids incorporated), which drop off the ribosome during protein synthesis, or as a result of ribosome stalling. In terms of biological role, catalyzes the release of premature peptidyl moieties from peptidyl-tRNA molecules trapped in stalled 50S ribosomal subunits, and thus maintains levels of free tRNAs and 50S ribosomes. This Mycobacterium ulcerans (strain Agy99) protein is Peptidyl-tRNA hydrolase.